Reading from the N-terminus, the 350-residue chain is Integrin beta-1-binding protein 2 (350 aa).

Zn(2+) is bound by residues Cys5, Cys10, Cys24, and His27. In terms of domain architecture, CHORD 1 spans Cys5–His64. Residues Pro28–Pro31 carry the SH3-binding motif. Cys42, Cys43, Cys59, and His64 together coordinate Zn(2+). Residues Pro70–Pro79 carry the SH3-binding motif. A disordered region spans residues Val72–Thr92. The segment covering Ala80 to Thr92 has biased composition (polar residues). Residues Cys150 and Cys155 each coordinate Zn(2+). One can recognise a CHORD 2 domain in the interval Cys150–His209. The SH2-binding motif lies at Tyr159–Pro162. Positions 169 and 172 each coordinate Zn(2+). Residues Pro173–Pro176 carry the SH3-binding motif. Zn(2+) contacts are provided by Cys187, Cys188, Cys204, and His209. The CS domain maps to Pro216–Glu305. Positions Tyr235–Ile238 match the SH2-binding motif. A disordered region spans residues Gly317–Glu350. The segment covering Glu321 to Glu350 has biased composition (acidic residues).

As to quaternary structure, interacts with beta-1 integrin subunit. This interaction is regulated by divalent cations, and it occurs only in absence of calcium. As to expression, expressed in skeletal and cardiac muscles but not in other tissues. Is localized in rows flanking the Z line containing alpha-actinin.

In terms of biological role, may play a role during maturation and/or organization of muscles cells. This chain is Integrin beta-1-binding protein 2 (Itgb1bp2), found in Mus musculus (Mouse).